Here is a 55-residue protein sequence, read N- to C-terminus: Eclosion hormone (55 aa).

This sequence belongs to the insect eclosion hormone family.

It is found in the secreted. Neuropeptide that triggers the performance of ecdysis behaviors at the end of a molt. It triggers adult behavior patterns: larval, pupal and adult ecdysis, and plasticization during the molt. The chain is Eclosion hormone from Romalea microptera (Eastern lubber grasshopper).